The following is an 87-amino-acid chain: Small ribosomal subunit protein uS17 (87 aa).

This sequence belongs to the universal ribosomal protein uS17 family. In terms of assembly, part of the 30S ribosomal subunit.

In terms of biological role, one of the primary rRNA binding proteins, it binds specifically to the 5'-end of 16S ribosomal RNA. The sequence is that of Small ribosomal subunit protein uS17 from Syntrophobacter fumaroxidans (strain DSM 10017 / MPOB).